A 340-amino-acid chain; its full sequence is uncharacterized protein (340 aa).

A signal peptide spans 1 to 23 (MQKKVLSLVLVLAVLESIVPVSA).

This is an uncharacterized protein from Archaeoglobus fulgidus (strain ATCC 49558 / DSM 4304 / JCM 9628 / NBRC 100126 / VC-16).